The sequence spans 521 residues: MALMILPFIGALSVSESLVAVVTVCLVYLIIKSFQDKIPEGLSRLPGPKPLPIIGNVLEVGSRPYLSLTEMGKRYGNVFQIQIGMRPVVVLSGNETVRQALIKQGDEFAGRPDLYSFRFISEGKSLAFSTDQAGVWRARRKLAYSALRSFSTLEGTTPEYSCVLEEHISKEAKYLIQQLDTVMKADGSFDPFRYIVVSVANVICGMCFGRRYDHHDQELLSLVNLSDEFGQVVGSGNPADFIPILQYLPNKTMKKFVSINDRFISFVQKIVSEHYATFNKDNIRDITDSLIDHCEDRKLDENANVQMSDEKVVGIVNDLFGAGFDTISTALSWSVMYLVAYPEIQEXLYQELKENVGLDRTPVLSDRNNLPLLESFILEIFRHSSFLPFTIPHCTTKDTSLNGYYIPKDTCVFINQWQINHDPELWKEPSSFNPDRFLSADGTEVNKVDGEKVMIFGMGKRRCIGEVIARNEVYLFLAILIQKLHFCNLPGEPLDMTPEYGLTMKHKRCQLRATARVRSDH.

A substrate-binding site is contributed by F229. C463 lines the heme pocket.

This sequence belongs to the cytochrome P450 family. Requires heme as cofactor.

It is found in the endoplasmic reticulum membrane. It localises to the microsome membrane. It carries out the reaction an organic molecule + reduced [NADPH--hemoprotein reductase] + O2 = an alcohol + oxidized [NADPH--hemoprotein reductase] + H2O + H(+). In terms of biological role, cytochromes P450 are a group of heme-thiolate monooxygenases. They oxidize a variety of structurally unrelated compounds, including steroids, fatty acids, and xenobiotics. This Chelon saliens (Leaping mullet) protein is Cytochrome P450 1A1 (cyp1a1).